The primary structure comprises 506 residues: Alpha-L-fucosidase 1 (506 aa).

The N-terminal stretch at 1-23 (MNSQITLFFFFFSILSLSQISNS) is a signal peptide. Residues Asn22, Asn82, Asn248, Asn320, Asn355, and Asn487 are each glycosylated (N-linked (GlcNAc...) asparagine).

It belongs to the glycosyl hydrolase 29 family.

The protein localises to the secreted. It localises to the extracellular space. The protein resides in the apoplast. The enzyme catalyses an alpha-L-fucoside + H2O = L-fucose + an alcohol. Functionally, hydrolyzes both 3- and 4-linked fucoses in Lewis determinants. Not active on neither 2-linked fucose nor on fucose in alpha-1,3-linkage to the innermost GlcNAc. This chain is Alpha-L-fucosidase 1 (FUC1), found in Arabidopsis thaliana (Mouse-ear cress).